Consider the following 179-residue polypeptide: Ribosome-recycling factor (179 aa).

The protein belongs to the RRF family.

The protein resides in the cytoplasm. In terms of biological role, responsible for the release of ribosomes from messenger RNA at the termination of protein biosynthesis. May increase the efficiency of translation by recycling ribosomes from one round of translation to another. This chain is Ribosome-recycling factor, found in Chlamydia trachomatis serovar L2b (strain UCH-1/proctitis).